A 249-amino-acid chain; its full sequence is 3alpha-hydroxy bile acid-CoA-ester 3-dehydrogenase 1/3 (249 aa).

NAD(+) is bound by residues 15-18, glutamate 38, glutamate 42, and asparagine 92; that span reads TRGI. Serine 144 lines the substrate pocket. Active-site proton donor/acceptor residues include tyrosine 157 and lysine 161. NAD(+) contacts are provided by residues lysine 161 and 190–192; that span reads VDT.

This sequence belongs to the short-chain dehydrogenases/reductases (SDR) family. In terms of assembly, homotetramer.

The catalysed reaction is a 3alpha-hydroxy bile acid CoA + NAD(+) = a 3-oxo bile acid CoA + NADH + H(+). It carries out the reaction choloyl-CoA + NAD(+) = 7alpha,12alpha-dihydroxy-3-oxochol-24-oyl-CoA + NADH + H(+). It catalyses the reaction chenodeoxycholoyl-CoA + NAD(+) = 7alpha-hydroxy-3-oxochol-24-oyl-CoA + NADH + H(+). The enzyme catalyses deoxycholoyl-CoA + NAD(+) = 12alpha-hydroxy-3-oxocholan-24-oyl-CoA + NADH + H(+). The catalysed reaction is lithocholoyl-CoA + NAD(+) = 3-oxocholan-24-oyl-CoA + NADH + H(+). It participates in lipid metabolism; bile acid biosynthesis. Involved in the multi-step bile acid 7alpha-dehydroxylation pathway that transforms primary bile acids to secondary bile acids in the human gut. Catalyzes the oxidation of C3-hydroxyl group of CoA conjugated bile acids generating a C3-oxo bile acid intermediate. Can use choloyl-CoA, chenodeoxycholoyl-CoA, deoxycholoyl-CoA, and lithocholoyl-CoA as substrates with similar efficiency. Highly prefers NAD over NADP as cosubstrate. Also catalyzes the reverse reactions; in vitro, the preferred direction of reaction depends on the pH. Has very little activity with unconjugated (non-CoA) bile acid substrates. The polypeptide is 3alpha-hydroxy bile acid-CoA-ester 3-dehydrogenase 1/3 (baiA1) (Clostridium scindens (strain JCM 10418 / VPI 12708)).